The sequence spans 56 residues: Sex-specific storage protein 1 (56 aa).

This sequence belongs to the hemocyanin family. Expressed in fat body and ovary.

The protein resides in the secreted. Its function is as follows. Larval storage protein (LSP) which may serve as a store of amino acids for synthesis of adult proteins. The biosynthesis, accumulation and sequestration of storage protein-1 takes place during metamorphosis and saves energy for the non-feeding pupal stage. May also be essential for egg formation. The polypeptide is Sex-specific storage protein 1 (Amsacta albistriga (Red hairy caterpillar)).